We begin with the raw amino-acid sequence, 34 residues long: Subtilosin-A (34 aa).

Residues 1–34 constitute a cross-link (cyclopeptide (Asn-Gly)); that stretch reads NKGCATCSIGIACLVDGPIPDFECAGATGLGLWG. A cross-link (2-cysteinyl-D-allo-threonine (Cys-Thr)) is located at residues 7–28; that stretch reads CSIGIACLVDGPIPDFECAGAT. The segment at residues 13 to 22 is a cross-link (2-cysteinyl-L-phenylalanine (Cys-Phe)); that stretch reads CLVDGPIPDF.

The protein belongs to the bacteriocin class V family. Post-translationally, alpha-amino of Asn-1 is covalently linked with the carboxyl of Gly-34 to form a cyclopeptide. Thioether cross-links are formed between cysteines and the alpha-carbons of other amino acids, Cys-7 to Thr-28 and Cys-13 to Phe-22. In forming this cross-link, Thr-28 is converted to D-amino acid.

The protein localises to the secreted. Has bactericidal activity against some Gram-positive bacteria. The protein is Subtilosin-A of Cytobacillus firmus (Bacillus firmus).